Consider the following 159-residue polypeptide: MQKRAIYPGTFDPITNGHLDIVTRATQMFDHVILAIAASPGKKPMFTLNERVALAQKATAHLGNVEVVGFSDLMANFARDRQANILIRGLRAVADFEYEMQLAHMNRHLMPQLESVFLMPSKEWSFISSSLVKEVARHQGDVTHFLPDNVHQALMDKLK.

Thr10 serves as a coordination point for substrate. ATP-binding positions include 10-11 (TF) and His18. Substrate is bound by residues Lys42, Met74, and Arg88. Residues 89–91 (GLR), Glu99, and 124–130 (WSFISSS) contribute to the ATP site.

Belongs to the bacterial CoaD family. In terms of assembly, homohexamer. It depends on Mg(2+) as a cofactor.

It is found in the cytoplasm. It carries out the reaction (R)-4'-phosphopantetheine + ATP + H(+) = 3'-dephospho-CoA + diphosphate. It functions in the pathway cofactor biosynthesis; coenzyme A biosynthesis; CoA from (R)-pantothenate: step 4/5. Functionally, reversibly transfers an adenylyl group from ATP to 4'-phosphopantetheine, yielding dephospho-CoA (dPCoA) and pyrophosphate. This chain is Phosphopantetheine adenylyltransferase, found in Salmonella paratyphi A (strain ATCC 9150 / SARB42).